Consider the following 737-residue polypeptide: Ribosome-releasing factor 2, mitochondrial (737 aa).

The N-terminal 29 residues, 1 to 29 (MLKYALHSGGMPRNRLLRQLSAYIFRRSY), are a transit peptide targeting the mitochondrion. In terms of domain architecture, tr-type G spans 31–310 (SNIRNIGILA…AVNTYLPAPE (280 aa)). GTP-binding positions include 40–47 (AHIDAGKT), 104–108 (DTPGH), and 158–161 (NKMD).

Belongs to the TRAFAC class translation factor GTPase superfamily. Classic translation factor GTPase family. EF-G/EF-2 subfamily.

Its subcellular location is the mitochondrion. Functionally, mitochondrial GTPase that mediates the disassembly of ribosomes from messenger RNA at the termination of mitochondrial protein biosynthesis. Not involved in the GTP-dependent ribosomal translocation step during translation elongation. The chain is Ribosome-releasing factor 2, mitochondrial from Drosophila persimilis (Fruit fly).